Consider the following 396-residue polypeptide: Phosphoglycerate kinase (396 aa).

Residues 21–23, Arg-36, 59–62, Arg-119, and Arg-156 each bind substrate; these read DFN and HLGK. Residues Lys-206, Gly-294, Glu-325, and 352 to 355 each bind ATP; that span reads GGDS.

It belongs to the phosphoglycerate kinase family. In terms of assembly, monomer.

It localises to the cytoplasm. The catalysed reaction is (2R)-3-phosphoglycerate + ATP = (2R)-3-phospho-glyceroyl phosphate + ADP. It participates in carbohydrate degradation; glycolysis; pyruvate from D-glyceraldehyde 3-phosphate: step 2/5. The sequence is that of Phosphoglycerate kinase from Staphylococcus aureus (strain bovine RF122 / ET3-1).